Consider the following 66-residue polypeptide: Large ribosomal subunit protein uL29 (66 aa).

This sequence belongs to the universal ribosomal protein uL29 family.

The chain is Large ribosomal subunit protein uL29 from Mesorhizobium japonicum (strain LMG 29417 / CECT 9101 / MAFF 303099) (Mesorhizobium loti (strain MAFF 303099)).